We begin with the raw amino-acid sequence, 734 residues long: Elongation factor G, mitochondrial (734 aa).

The N-terminal 32 residues, 1-32 (MTSFLTSRFGGLALRNVMNNKNGINSFGLRCF), are a transit peptide targeting the mitochondrion. Residues 38–318 (SGLRNIGISA…GVIKYLPSPN (281 aa)) enclose the tr-type G domain. Residues 47–54 (AHIDSGKT), 114–118 (DTPGH), and 168–171 (NKLD) each bind GTP.

This sequence belongs to the TRAFAC class translation factor GTPase superfamily. Classic translation factor GTPase family. EF-G/EF-2 subfamily.

It is found in the mitochondrion. The catalysed reaction is GTP + H2O = GDP + phosphate + H(+). Its pathway is protein biosynthesis; polypeptide chain elongation. Functionally, mitochondrial GTPase that catalyzes the GTP-dependent ribosomal translocation step during translation elongation. During this step, the ribosome changes from the pre-translocational (PRE) to the post-translocational (POST) state as the newly formed A-site-bound peptidyl-tRNA and P-site-bound deacylated tRNA move to the P and E sites, respectively. Catalyzes the coordinated movement of the two tRNA molecules, the mRNA and conformational changes in the ribosome. The polypeptide is Elongation factor G, mitochondrial (gfm1) (Dictyostelium discoideum (Social amoeba)).